Here is a 476-residue protein sequence, read N- to C-terminus: Aspartyl/glutamyl-tRNA(Asn/Gln) amidotransferase subunit B (476 aa).

This sequence belongs to the GatB/GatE family. GatB subfamily. In terms of assembly, heterotrimer of A, B and C subunits.

The catalysed reaction is L-glutamyl-tRNA(Gln) + L-glutamine + ATP + H2O = L-glutaminyl-tRNA(Gln) + L-glutamate + ADP + phosphate + H(+). It carries out the reaction L-aspartyl-tRNA(Asn) + L-glutamine + ATP + H2O = L-asparaginyl-tRNA(Asn) + L-glutamate + ADP + phosphate + 2 H(+). Allows the formation of correctly charged Asn-tRNA(Asn) or Gln-tRNA(Gln) through the transamidation of misacylated Asp-tRNA(Asn) or Glu-tRNA(Gln) in organisms which lack either or both of asparaginyl-tRNA or glutaminyl-tRNA synthetases. The reaction takes place in the presence of glutamine and ATP through an activated phospho-Asp-tRNA(Asn) or phospho-Glu-tRNA(Gln). The protein is Aspartyl/glutamyl-tRNA(Asn/Gln) amidotransferase subunit B of Lactobacillus helveticus (strain DPC 4571).